Here is a 113-residue protein sequence, read N- to C-terminus: Nucleoid-associated protein CLH_3225 (113 aa).

Residues 1–14 (MAKGGFPGGFGGGN) show a composition bias toward gly residues. The disordered stretch occupies residues 1-31 (MAKGGFPGGFGGGNMNNLMKQAQKLQKQMED).

The protein belongs to the YbaB/EbfC family. Homodimer.

The protein resides in the cytoplasm. The protein localises to the nucleoid. Functionally, binds to DNA and alters its conformation. May be involved in regulation of gene expression, nucleoid organization and DNA protection. The chain is Nucleoid-associated protein CLH_3225 from Clostridium botulinum (strain Alaska E43 / Type E3).